Reading from the N-terminus, the 222-residue chain is NAD(P)H-hydrate epimerase (222 aa).

In terms of domain architecture, YjeF N-terminal spans 9–209; it reads MQQIDSYTIE…DIGLRLPEDF (201 aa). 57–61 provides a ligand contact to (6S)-NADPHX; the sequence is NNGAD. The K(+) site is built by Asn-58 and Asp-119. Residues 123–129 and Asp-152 contribute to the (6S)-NADPHX site; that span reads GVGLNNT. Thr-155 provides a ligand contact to K(+).

It belongs to the NnrE/AIBP family. Requires K(+) as cofactor.

It carries out the reaction (6R)-NADHX = (6S)-NADHX. It catalyses the reaction (6R)-NADPHX = (6S)-NADPHX. Catalyzes the epimerization of the S- and R-forms of NAD(P)HX, a damaged form of NAD(P)H that is a result of enzymatic or heat-dependent hydration. This is a prerequisite for the S-specific NAD(P)H-hydrate dehydratase to allow the repair of both epimers of NAD(P)HX. The chain is NAD(P)H-hydrate epimerase from Leuconostoc citreum (strain KM20).